A 141-amino-acid polypeptide reads, in one-letter code: MKKKRFNSDIEVQAFARHICMSAHKMRRVIDQIRGRSYEQTLMILELMPYRASYPIFRLIYSAAANASKTMGSKEADSLISKAEVNEGTFIKKLKPRARGRSYPIKKPTCHIIIVLKDKSKKPKSFLERKYGFVDKYMIGK.

It belongs to the universal ribosomal protein uL22 family. In terms of assembly, part of the 50S ribosomal subunit.

Its subcellular location is the plastid. The protein resides in the chloroplast. Its function is as follows. This protein binds specifically to 23S rRNA. Functionally, the globular domain of the protein is located near the polypeptide exit tunnel on the outside of the subunit, while an extended beta-hairpin is found that lines the wall of the exit tunnel in the center of the 70S ribosome. This is Large ribosomal subunit protein uL22c (rpl22) from Chloranthus spicatus (Chulantree).